The primary structure comprises 155 residues: Small ribosomal subunit protein uS7 (155 aa).

It belongs to the universal ribosomal protein uS7 family. As to quaternary structure, part of the 30S ribosomal subunit. Contacts proteins S9 and S11.

In terms of biological role, one of the primary rRNA binding proteins, it binds directly to 16S rRNA where it nucleates assembly of the head domain of the 30S subunit. Is located at the subunit interface close to the decoding center, probably blocks exit of the E-site tRNA. In Xanthomonas axonopodis pv. citri (strain 306), this protein is Small ribosomal subunit protein uS7.